Here is a 507-residue protein sequence, read N- to C-terminus: Beta-glucosidase 13 (507 aa).

The signal sequence occupies residues 1 to 22 (MRTKYFSLLVFIIVLASNEVIA). Residue glutamine 50 coordinates a beta-D-glucoside. N-linked (GlcNAc...) asparagine glycosylation occurs at asparagine 81. Residues histidine 154 and 199–200 (NE) each bind a beta-D-glucoside. Glutamate 200 serves as the catalytic Proton donor. Cysteines 219 and 227 form a disulfide. Asparagine 226 is a glycosylation site (N-linked (GlcNAc...) asparagine). An a beta-D-glucoside-binding site is contributed by tyrosine 344. N-linked (GlcNAc...) asparagine glycosylation is present at asparagine 358. A beta-D-glucoside-binding positions include glutamate 414, tryptophan 459, 466 to 467 (EW), and phenylalanine 475. Glutamate 414 acts as the Nucleophile in catalysis.

It belongs to the glycosyl hydrolase 1 family.

The enzyme catalyses Hydrolysis of terminal, non-reducing beta-D-glucosyl residues with release of beta-D-glucose.. This Arabidopsis thaliana (Mouse-ear cress) protein is Beta-glucosidase 13.